The following is a 155-amino-acid chain: Ribosomal RNA large subunit methyltransferase H (155 aa).

S-adenosyl-L-methionine is bound by residues Leu-72, Gly-104, and 123-128; that span reads LAKITL.

The protein belongs to the RNA methyltransferase RlmH family. Homodimer.

The protein localises to the cytoplasm. It catalyses the reaction pseudouridine(1915) in 23S rRNA + S-adenosyl-L-methionine = N(3)-methylpseudouridine(1915) in 23S rRNA + S-adenosyl-L-homocysteine + H(+). In terms of biological role, specifically methylates the pseudouridine at position 1915 (m3Psi1915) in 23S rRNA. In Mycoplasma capricolum subsp. capricolum (strain California kid / ATCC 27343 / NCTC 10154), this protein is Ribosomal RNA large subunit methyltransferase H.